We begin with the raw amino-acid sequence, 272 residues long: Small ribosomal subunit protein uS3 (272 aa).

One can recognise a KH type-2 domain in the interval 43 to 111 (IRELMTTGME…QIQLNILEVK (69 aa)). Positions 218-272 (AKEAAQPSGRGRGGERRGGGERRRRNDRAERAPRQENAGAGAETPAAAPAEGGNA) are disordered. Residues 229 to 238 (RGGERRGGGE) show a composition bias toward basic and acidic residues. Low complexity predominate over residues 253–272 (ENAGAGAETPAAAPAEGGNA).

This sequence belongs to the universal ribosomal protein uS3 family. Part of the 30S ribosomal subunit. Forms a tight complex with proteins S10 and S14.

Its function is as follows. Binds the lower part of the 30S subunit head. Binds mRNA in the 70S ribosome, positioning it for translation. The chain is Small ribosomal subunit protein uS3 from Micrococcus luteus (strain ATCC 4698 / DSM 20030 / JCM 1464 / CCM 169 / CCUG 5858 / IAM 1056 / NBRC 3333 / NCIMB 9278 / NCTC 2665 / VKM Ac-2230) (Micrococcus lysodeikticus).